The sequence spans 295 residues: Pantothenate synthetase (295 aa).

30 to 37 (MGNLHDGH) lines the ATP pocket. H37 (proton donor) is an active-site residue. Q61 lines the (R)-pantoate pocket. Position 61 (Q61) interacts with beta-alanine. 149 to 152 (GEKD) serves as a coordination point for ATP. Position 155 (Q155) interacts with (R)-pantoate. ATP is bound by residues V178 and 186-189 (MSSR).

Belongs to the pantothenate synthetase family. In terms of assembly, homodimer.

It localises to the cytoplasm. The catalysed reaction is (R)-pantoate + beta-alanine + ATP = (R)-pantothenate + AMP + diphosphate + H(+). Its pathway is cofactor biosynthesis; (R)-pantothenate biosynthesis; (R)-pantothenate from (R)-pantoate and beta-alanine: step 1/1. Catalyzes the condensation of pantoate with beta-alanine in an ATP-dependent reaction via a pantoyl-adenylate intermediate. The protein is Pantothenate synthetase of Photobacterium profundum (strain SS9).